A 99-amino-acid polypeptide reads, in one-letter code: Small ribosomal subunit protein bS16 (99 aa).

The disordered stretch occupies residues 80–99; it reads PPRQQNEAKRETAETAQPEA.

This sequence belongs to the bacterial ribosomal protein bS16 family.

This chain is Small ribosomal subunit protein bS16, found in Thermomicrobium roseum (strain ATCC 27502 / DSM 5159 / P-2).